The sequence spans 139 residues: Serpin-like protein HMSD (139 aa).

The N-terminal stretch at 1–20 (MSISSALAMVFMGAKGNTAA) is a signal peptide. The N-linked (GlcNAc...) asparagine glycan is linked to Asn-50.

This sequence belongs to the serpin family. Highly expressed in dendritic cells and primary leukemia cells, especially those of myeloid lineage.

It localises to the secreted. Putative serine protease inhibitor. The protein is Serpin-like protein HMSD (HMSD) of Homo sapiens (Human).